A 317-amino-acid chain; its full sequence is uncharacterized protein (317 aa).

7 helical membrane passes run 24–44 (ISII…TGIM), 63–83 (LSIS…SILA), 136–156 (LGVA…ISED), 187–207 (LIPI…IGFF), 229–249 (ILAL…GGFL), 252–272 (GILS…LTFS), and 295–315 (IVMV…AGLL).

This sequence to M.jannaschii MJ0880, MJ1556 and MJ1589.

The protein resides in the cell membrane. This is an uncharacterized protein from Methanocaldococcus jannaschii (strain ATCC 43067 / DSM 2661 / JAL-1 / JCM 10045 / NBRC 100440) (Methanococcus jannaschii).